We begin with the raw amino-acid sequence, 139 residues long: UPF0251 protein Csac_0224 (139 aa).

Belongs to the UPF0251 family.

This Caldicellulosiruptor saccharolyticus (strain ATCC 43494 / DSM 8903 / Tp8T 6331) protein is UPF0251 protein Csac_0224.